The primary structure comprises 316 residues: Acetyl-coenzyme A carboxylase carboxyl transferase subunit alpha (316 aa).

Positions 39–293 constitute a CoA carboxyltransferase C-terminal domain; the sequence is RLQDKSHALT…RQTLLAQLES (255 aa).

Belongs to the AccA family. As to quaternary structure, acetyl-CoA carboxylase is a heterohexamer composed of biotin carboxyl carrier protein (AccB), biotin carboxylase (AccC) and two subunits each of ACCase subunit alpha (AccA) and ACCase subunit beta (AccD).

The protein localises to the cytoplasm. It carries out the reaction N(6)-carboxybiotinyl-L-lysyl-[protein] + acetyl-CoA = N(6)-biotinyl-L-lysyl-[protein] + malonyl-CoA. Its pathway is lipid metabolism; malonyl-CoA biosynthesis; malonyl-CoA from acetyl-CoA: step 1/1. Component of the acetyl coenzyme A carboxylase (ACC) complex. First, biotin carboxylase catalyzes the carboxylation of biotin on its carrier protein (BCCP) and then the CO(2) group is transferred by the carboxyltransferase to acetyl-CoA to form malonyl-CoA. This Azotobacter vinelandii (strain DJ / ATCC BAA-1303) protein is Acetyl-coenzyme A carboxylase carboxyl transferase subunit alpha.